A 256-amino-acid chain; its full sequence is Ribosomal RNA small subunit methyltransferase A (256 aa).

S-adenosyl-L-methionine is bound by residues N12, L14, G39, E60, D85, and N103.

The protein belongs to the class I-like SAM-binding methyltransferase superfamily. rRNA adenine N(6)-methyltransferase family. RsmA subfamily.

The protein resides in the cytoplasm. The catalysed reaction is adenosine(1518)/adenosine(1519) in 16S rRNA + 4 S-adenosyl-L-methionine = N(6)-dimethyladenosine(1518)/N(6)-dimethyladenosine(1519) in 16S rRNA + 4 S-adenosyl-L-homocysteine + 4 H(+). Its function is as follows. Specifically dimethylates two adjacent adenosines (A1518 and A1519) in the loop of a conserved hairpin near the 3'-end of 16S rRNA in the 30S particle. May play a critical role in biogenesis of 30S subunits. In Legionella pneumophila (strain Corby), this protein is Ribosomal RNA small subunit methyltransferase A.